Consider the following 423-residue polypeptide: F-box/LRR-repeat protein 2 (423 aa).

The region spanning 9–55 is the F-box domain; the sequence is GLINKKLPKELLLRIFSFLDIVTLCRCAQISKAWNILALDGSNWQRI. LRR repeat units lie at residues 61–87, 88–113, 114–139, 140–165, 166–191, 192–217, 218–243, 244–269, 270–295, 296–321, 322–350, 351–375, and 376–401; these read QTDV…SLRG, CIGV…NLNG, CTKI…DLTS, CVSI…NLSW, CDQI…LLRG, CTQL…NLQS, CSRI…CLSG, CSNL…EAAR, CSHL…DLEE, CILI…SLSH, CELI…ELDN, CLLI…ELYD, and CQQV…AYFA. An interaction with Calmodulin region spans residues 80 to 90; that stretch reads LRKLSLRGCIG. Residue lysine 201 forms a Glycyl lysine isopeptide (Lys-Gly) (interchain with G-Cter in ubiquitin) linkage. The residue at position 404 (threonine 404) is a Phosphothreonine. Residue cysteine 420 is the site of S-geranylgeranyl cysteine attachment. Residues 420–423 carry the CAAX motif motif; sequence CVIL.

In terms of assembly, part of the SCF (SKP1-CUL1-F-box) E3 ubiquitin-protein ligase complex SCF(FBXL2) composed of CUL1, SKP1, RBX1 and FBXL2. Interacts with calmodulin; may antagonize substrate ubiquitination by SCF(FBXL2). May interact with PIK3R1. Interacts with PTPN13. (Microbial infection) Interacts with hepatitis C virus non-structural protein 5A (NS5A) and less efficiently, with hepatitis C virus non-structural protein 5B (NS5B); a reaction crucial for hepatitis C virus RNA replication. Phosphorylated by GSK-beta (GSK3B), promoting recognition by FBXO3, leading to its ubiquitination by the SCF(FBXO3) complex. In terms of processing, ubiquitinated at Lys-201 by the SCF(FBXO3) complex in response to lipopolysaccharide (LPS), leading to its degradation by the proteasome. In terms of tissue distribution, expressed in brain, heart, kidney, liver, lung, pancreas and placenta.

It localises to the membrane. It functions in the pathway protein modification; protein ubiquitination. Calcium-activated substrate recognition component of the SCF (SKP1-cullin-F-box protein) E3 ubiquitin-protein ligase complex, SCF(FBXL2), which mediates the ubiquitination and subsequent proteasomal degradation of target proteins. Unlike many F-box proteins, FBXL2 does not seem to target phosphodegron within its substrates but rather calmodulin-binding motifs and is thereby antagonized by calmodulin. This is the case for the cyclins CCND2 and CCND3 which polyubiquitination and subsequent degradation are inhibited by calmodulin. Through CCND2 and CCND3 degradation induces cell-cycle arrest in G(0). SCF(FBXL2) also mediates PIK3R2 ubiquitination and proteasomal degradation thereby regulating phosphatidylinositol 3-kinase signaling and autophagy. PCYT1A monoubiquitination by SCF(FBXL2) and subsequent degradation regulates synthesis of phosphatidylcholine, which is utilized for formation of membranes and of pulmonary surfactant. The SCF(FBXL2) complex acts as a regulator of inflammation by mediating ubiquitination and degradation of TRAF proteins (TRAF1, TRAF2, TRAF3, TRAF4, TRAF5 and TRAF6). The SCF(FBXL2) complex acts as a negative regulator of the NLRP3 inflammasome by mediating ubiquitination and degradation of NLRP3. This is F-box/LRR-repeat protein 2 from Homo sapiens (Human).